We begin with the raw amino-acid sequence, 151 residues long: Guanylate kinase homolog (151 aa).

The Guanylate kinase-like domain occupies 1-141 (MEREGVDYHY…AYSKLIQILQ (141 aa)).

It belongs to the guanylate kinase family.

The chain is Guanylate kinase homolog from Vaccinia virus (strain Copenhagen) (VACV).